A 311-amino-acid chain; its full sequence is Malate dehydrogenase (311 aa).

NAD(+) is bound by residues 7 to 13 (GAAGGIG) and Asp34. Residues Arg81 and Arg87 each contribute to the substrate site. Residues Asn94 and 117–119 (ITN) contribute to the NAD(+) site. The substrate site is built by Asn119 and Arg153. The Proton acceptor role is filled by His177. NAD(+) is bound at residue Met227.

It belongs to the LDH/MDH superfamily. MDH type 1 family. Homodimer.

It catalyses the reaction (S)-malate + NAD(+) = oxaloacetate + NADH + H(+). Functionally, catalyzes the reversible oxidation of malate to oxaloacetate. The protein is Malate dehydrogenase of Shewanella sp. (strain MR-4).